The following is a 521-amino-acid chain: MNQSKEVRTRFAPSPSGFLHVGGARTALFNYLYAKSQGGKFILRIEDTDQNRSTEDSFKIILESLKWLGVNWDEGPEVGGEYGPYIQSQRLNIYKEYTEKLLKEKKAYRCFCTQEELEAKKKQSEAMGVPYVYDGLHANMSDEEVQEKLKQGIPYSVRFKTPSKTLIINDIIQGKVKFETKLIGDFIIVKSDGFPSYNYAVVVDDALMKITHVIRGVGHLSNTPRQILLYEALGYNIPEFAHASEIVGMDGKKLSKRAGATSILAFRDLGYLPETFRNYMALLGWTSTDGREFLPGDELEKIFDVHRCSKSPSTFDVFKKPKGSDEEVVTNFSDLTQIAEAMNPKSKLNWLSNRTIRDLNISKVLENLLPFLMDRKDIPAEVKNVNNPILTSIVESVRVYLDNLTQAPDYVAEFFVTDLKIQSEETIGFLKDGEGPKVVNEFYEILKNSDPKTDEDYKNLMSKVGEVTGQKGKTLYMPIRAATTGKSAGLELPILFPLLGKEKLLQRIEKTSKETGISLSN.

Positions 13 to 23 match the 'HIGH' region motif; sequence PSPSGFLHVGG. The 'KMSKS' region motif lies at 253–257; that stretch reads KLSKR. ATP is bound at residue lysine 256.

The protein belongs to the class-I aminoacyl-tRNA synthetase family. Glutamate--tRNA ligase type 1 subfamily. In terms of assembly, monomer.

The protein resides in the cytoplasm. It catalyses the reaction tRNA(Glu) + L-glutamate + ATP = L-glutamyl-tRNA(Glu) + AMP + diphosphate. Catalyzes the attachment of glutamate to tRNA(Glu) in a two-step reaction: glutamate is first activated by ATP to form Glu-AMP and then transferred to the acceptor end of tRNA(Glu). The protein is Glutamate--tRNA ligase of Leptospira interrogans serogroup Icterohaemorrhagiae serovar copenhageni (strain Fiocruz L1-130).